The primary structure comprises 132 residues: UPF0102 protein Acid_2433 (132 aa).

This sequence belongs to the UPF0102 family.

The protein is UPF0102 protein Acid_2433 of Solibacter usitatus (strain Ellin6076).